We begin with the raw amino-acid sequence, 417 residues long: Serine hydroxymethyltransferase (417 aa).

(6S)-5,6,7,8-tetrahydrofolate is bound by residues Leu112 and 116 to 118 (GHL). Lys221 carries the post-translational modification N6-(pyridoxal phosphate)lysine. Glu247 contributes to the (6S)-5,6,7,8-tetrahydrofolate binding site.

It belongs to the SHMT family. In terms of assembly, homodimer. Requires pyridoxal 5'-phosphate as cofactor.

It is found in the cytoplasm. The catalysed reaction is (6R)-5,10-methylene-5,6,7,8-tetrahydrofolate + glycine + H2O = (6S)-5,6,7,8-tetrahydrofolate + L-serine. Its pathway is one-carbon metabolism; tetrahydrofolate interconversion. It functions in the pathway amino-acid biosynthesis; glycine biosynthesis; glycine from L-serine: step 1/1. In terms of biological role, catalyzes the reversible interconversion of serine and glycine with tetrahydrofolate (THF) serving as the one-carbon carrier. This reaction serves as the major source of one-carbon groups required for the biosynthesis of purines, thymidylate, methionine, and other important biomolecules. Also exhibits THF-independent aldolase activity toward beta-hydroxyamino acids, producing glycine and aldehydes, via a retro-aldol mechanism. This is Serine hydroxymethyltransferase from Borrelia recurrentis (strain A1).